The following is a 143-amino-acid chain: Nucleoside diphosphate kinase (143 aa).

The ATP site is built by K11, F59, R87, T93, R104, and N114. H117 acts as the Pros-phosphohistidine intermediate in catalysis.

Belongs to the NDK family. As to quaternary structure, homotetramer. The cofactor is Mg(2+).

The protein localises to the cytoplasm. It carries out the reaction a 2'-deoxyribonucleoside 5'-diphosphate + ATP = a 2'-deoxyribonucleoside 5'-triphosphate + ADP. It catalyses the reaction a ribonucleoside 5'-diphosphate + ATP = a ribonucleoside 5'-triphosphate + ADP. Functionally, major role in the synthesis of nucleoside triphosphates other than ATP. The ATP gamma phosphate is transferred to the NDP beta phosphate via a ping-pong mechanism, using a phosphorylated active-site intermediate. The chain is Nucleoside diphosphate kinase from Clostridium perfringens (strain ATCC 13124 / DSM 756 / JCM 1290 / NCIMB 6125 / NCTC 8237 / Type A).